Consider the following 688-residue polypeptide: Lipase (688 aa).

The first 35 residues, 1 to 35, serve as a signal peptide directing secretion; sequence MKTRQNKYSIRKFSVGASSILIAALLFMGGGSAQA. A disordered region spans residues 31 to 309; it reads GSAQAAEQQQ…KSAKQKQYKN (279 aa). Residues 36–302 constitute a propeptide, removed in mature form; the sequence is AEQQQDKGTV…KNEDQTNKSA (267 aa). Positions 45–54 are enriched in polar residues; it reads VENSTTQSIG. The span at 68–79 shows a compositional bias: low complexity; sequence NKNVNEKSNVNS. Composition is skewed to basic and acidic residues over residues 84–95 and 103–143; these read ESLHNETPKNED and SQND…KHAS. The segment covering 144-172 has biased composition (polar residues); it reads ENNQTLHSKAAQSNEDVKTKPSQLDNTAA. A compositionally biased stretch (basic and acidic residues) spans 173–183; it reads KQEDSQKENLS. A compositionally biased stretch (polar residues) spans 184-211; it reads KQDTQSSKTTDLLRATAQNQSKDSQSTE. Positions 240-267 are enriched in basic and acidic residues; sequence SKEEPLKVDKQANPTTDKDKSSKNDKGS. Residues 274–289 show a composition bias toward polar residues; sequence LESNAVATTNKQSKQQ. S418 (nucleophile) is an active-site residue. The Charge relay system role is filled by D609. Position 647 (D647) interacts with Ca(2+). Residue H648 is the Charge relay system of the active site. 3 residues coordinate Ca(2+): D650, D655, and D658.

Belongs to the AB hydrolase superfamily. Lipase family.

It localises to the secreted. The catalysed reaction is a triacylglycerol + H2O = a diacylglycerol + a fatty acid + H(+). The chain is Lipase (lip) from Staphylococcus epidermidis (strain ATCC 12228 / FDA PCI 1200).